A 321-amino-acid polypeptide reads, in one-letter code: Small ribosomal subunit protein mS43 (321 aa).

The N-terminal 13 residues, 1–13 (MLRFTGARAIRKY), are a transit peptide targeting the mitochondrion.

Belongs to the mitochondrion-specific ribosomal protein mS43 family. As to quaternary structure, component of the mitochondrial small ribosomal subunit (mt-SSU). Mature yeast 74S mitochondrial ribosomes consist of a small (37S) and a large (54S) subunit. The 37S small subunit contains a 15S ribosomal RNA (15S mt-rRNA) and 34 different proteins. The 54S large subunit contains a 21S rRNA (21S mt-rRNA) and 46 different proteins. mS43 forms a heterodimer with mS42, building a large protuberance adjacent to the mRNA channel exit in the mt-SSU body.

It is found in the mitochondrion. Functionally, component of the mitochondrial ribosome (mitoribosome), a dedicated translation machinery responsible for the synthesis of mitochondrial genome-encoded proteins, including at least some of the essential transmembrane subunits of the mitochondrial respiratory chain. The mitoribosomes are attached to the mitochondrial inner membrane and translation products are cotranslationally integrated into the membrane. The polypeptide is Small ribosomal subunit protein mS43 (MRP1) (Saccharomyces cerevisiae (strain ATCC 204508 / S288c) (Baker's yeast)).